Consider the following 87-residue polypeptide: Small ribosomal subunit protein uS15c (87 aa).

This sequence belongs to the universal ribosomal protein uS15 family. As to quaternary structure, part of the 30S ribosomal subunit.

It is found in the plastid. Its subcellular location is the chloroplast. The polypeptide is Small ribosomal subunit protein uS15c (rps15) (Solanum tuberosum (Potato)).